The chain runs to 642 residues: Sterol O-acyltransferase 2 (642 aa).

Positions 174 to 194 (KSSPDAVDSVGKNDGAAPTTV) are disordered. Residues S175 and S176 each carry the phosphoserine modification. 5 consecutive transmembrane segments (helical) span residues 215 to 235 (FSGL…KALI), 292 to 312 (TGWI…MYLT), 404 to 424 (ISAK…QIEY), 442 to 462 (IFGT…PVAM), and 485 to 505 (LLVD…YLIW). An FYXDWWN motif motif is present at residues 523 to 529 (FYGDWWN). Helical transmembrane passes span 567–587 (ATLM…YVIF) and 622–642 (VIFW…YLTF). H579 is a catalytic residue.

This sequence belongs to the membrane-bound acyltransferase family. Sterol o-acyltransferase subfamily.

The protein localises to the endoplasmic reticulum membrane. The catalysed reaction is ergosterol + an acyl-CoA = ergosteryl ester + CoA. It carries out the reaction zymosterol + an acyl-CoA = zymosterol ester + CoA. Its function is as follows. Sterol O-acyltransferase that catalyzes the formation of stery esters. The chain is Sterol O-acyltransferase 2 from Saccharomyces cerevisiae (strain ATCC 204508 / S288c) (Baker's yeast).